Reading from the N-terminus, the 389-residue chain is Heat-inducible transcription repressor HrcA (389 aa).

It belongs to the HrcA family.

Its function is as follows. Negative regulator of class I heat shock genes (grpE-dnaK-dnaJ and groELS operons). Prevents heat-shock induction of these operons. This is Heat-inducible transcription repressor HrcA from Synechococcus sp. (strain JA-2-3B'a(2-13)) (Cyanobacteria bacterium Yellowstone B-Prime).